Consider the following 340-residue polypeptide: 4-hydroxythreonine-4-phosphate dehydrogenase (340 aa).

Substrate contacts are provided by H141 and T142. 3 residues coordinate a divalent metal cation: H171, H216, and H271. Substrate-binding residues include K279, N288, and R297.

The protein belongs to the PdxA family. In terms of assembly, homodimer. The cofactor is Zn(2+). Mg(2+) serves as cofactor. Requires Co(2+) as cofactor.

It is found in the cytoplasm. The catalysed reaction is 4-(phosphooxy)-L-threonine + NAD(+) = 3-amino-2-oxopropyl phosphate + CO2 + NADH. The protein operates within cofactor biosynthesis; pyridoxine 5'-phosphate biosynthesis; pyridoxine 5'-phosphate from D-erythrose 4-phosphate: step 4/5. In terms of biological role, catalyzes the NAD(P)-dependent oxidation of 4-(phosphooxy)-L-threonine (HTP) into 2-amino-3-oxo-4-(phosphooxy)butyric acid which spontaneously decarboxylates to form 3-amino-2-oxopropyl phosphate (AHAP). This Desulforapulum autotrophicum (strain ATCC 43914 / DSM 3382 / VKM B-1955 / HRM2) (Desulfobacterium autotrophicum) protein is 4-hydroxythreonine-4-phosphate dehydrogenase.